A 392-amino-acid chain; its full sequence is Streptogrisin-D (392 aa).

Residues 1–64 form the signal peptide; that stretch reads MCVSRRRNSG…AGFTFQTANA (64 aa). Residues 65 to 204 constitute a propeptide that is removed on maturation; it reads SDDVPAFGAK…NRTAGEFTPL (140 aa). A disulfide bridge connects residues C218 and C238. Catalysis depends on charge relay system residues H237, D266, and S348. Cysteines 342 and 369 form a disulfide.

This sequence belongs to the peptidase S1 family. Homodimer.

Its function is as follows. Has a primary specificity for large aliphatic or aromatic amino acids. The chain is Streptogrisin-D (sprD) from Streptomyces griseus.